The sequence spans 558 residues: Potassium-transporting ATPase potassium-binding subunit (558 aa).

12 consecutive transmembrane segments (helical) span residues 1–21 (MEII…SGYL), 66–86 (FNGF…WLFL), 127–147 (MIVM…VCIA), 166–186 (IVRF…ILLM), 245–265 (IWSN…MLFL), 281–301 (ALIL…LTMW), 327–347 (FGAG…TGSV), 354–374 (LTPL…VFGG), 377–397 (VGLM…SLMV), 416–436 (IVLV…LAFM), 482–502 (ISTG…QLMI), and 531–551 (IVFI…LGPI).

The protein belongs to the KdpA family. As to quaternary structure, the system is composed of three essential subunits: KdpA, KdpB and KdpC.

It is found in the cell membrane. In terms of biological role, part of the high-affinity ATP-driven potassium transport (or Kdp) system, which catalyzes the hydrolysis of ATP coupled with the electrogenic transport of potassium into the cytoplasm. This subunit binds the extracellular potassium ions and delivers the ions to the membrane domain of KdpB through an intramembrane tunnel. The polypeptide is Potassium-transporting ATPase potassium-binding subunit (Staphylococcus aureus (strain MSSA476)).